Consider the following 206-residue polypeptide: Small ribosomal subunit protein uS4 (206 aa).

Positions 96 to 156 (TRLDNVVYRM…EKSRTQARIK (61 aa)) constitute an S4 RNA-binding domain.

The protein belongs to the universal ribosomal protein uS4 family. As to quaternary structure, part of the 30S ribosomal subunit. Contacts protein S5. The interaction surface between S4 and S5 is involved in control of translational fidelity.

Functionally, one of the primary rRNA binding proteins, it binds directly to 16S rRNA where it nucleates assembly of the body of the 30S subunit. With S5 and S12 plays an important role in translational accuracy. This Shewanella amazonensis (strain ATCC BAA-1098 / SB2B) protein is Small ribosomal subunit protein uS4.